A 210-amino-acid chain; its full sequence is Proteasome subunit beta (210 aa).

A propeptide spans 1–9 (MIHDKVFKG) (removed in mature form; by autocatalysis). The active-site Nucleophile is the Thr10.

Belongs to the peptidase T1B family. As to quaternary structure, the 20S proteasome core is composed of 14 alpha and 14 beta subunits that assemble into four stacked heptameric rings, resulting in a barrel-shaped structure. The two inner rings, each composed of seven catalytic beta subunits, are sandwiched by two outer rings, each composed of seven alpha subunits. The catalytic chamber with the active sites is on the inside of the barrel. Has a gated structure, the ends of the cylinder being occluded by the N-termini of the alpha-subunits. Is capped at one or both ends by the proteasome regulatory ATPase, PAN.

It localises to the cytoplasm. The enzyme catalyses Cleavage of peptide bonds with very broad specificity.. The formation of the proteasomal ATPase PAN-20S proteasome complex, via the docking of the C-termini of PAN into the intersubunit pockets in the alpha-rings, triggers opening of the gate for substrate entry. Interconversion between the open-gate and close-gate conformations leads to a dynamic regulation of the 20S proteasome proteolysis activity. Component of the proteasome core, a large protease complex with broad specificity involved in protein degradation. The polypeptide is Proteasome subunit beta (Ferroglobus placidus (strain DSM 10642 / AEDII12DO)).